A 905-amino-acid polypeptide reads, in one-letter code: Coatomer subunit beta' (905 aa).

WD repeat units lie at residues 13–52 (ARSD…LVKT), 55–94 (VCDL…RVHM), 97–136 (AHSD…SCSQ), 140–180 (GHTH…PNFT), 183–224 (GHEK…CVQT), 227–266 (GHAQ…LEST), 350–388 (SCEI…NKSF), and 390–425 (SAQE…KSFK). The residue at position 627 (Lys627) is an N6-acetyllysine. Residues 746-783 (IRTGRLPEAAFLARTYLPSQVSRVVKLWRENLSKVNQK) form a WD 9 repeat. The tract at residues 837-873 (EEAKGFQPSRPTAQQEPDGKPASSPVIMASQTTHKEE) is disordered. The residue at position 859 (Ser859) is a Phosphoserine. Residues 867–891 (QTTHKEEKSLLELEVDLDNLELEDI) adopt a coiled-coil conformation.

It belongs to the WD repeat COPB2 family. In terms of assembly, oligomeric complex that consists of at least the alpha, beta, beta', gamma, delta, epsilon and zeta subunits. Probably interacts with PEX11A. Interacts with SCYL1. Interacts with JAGN1.

It is found in the cytoplasm. It localises to the cytosol. The protein localises to the golgi apparatus membrane. The protein resides in the cytoplasmic vesicle. Its subcellular location is the COPI-coated vesicle membrane. Its function is as follows. The coatomer is a cytosolic protein complex that binds to dilysine motifs and reversibly associates with Golgi non-clathrin-coated vesicles, which further mediate biosynthetic protein transport from the ER, via the Golgi up to the trans Golgi network. Coatomer complex is required for budding from Golgi membranes, and is essential for the retrograde Golgi-to-ER transport of dilysine-tagged proteins. In mammals, the coatomer can only be recruited by membranes associated to ADP-ribosylation factors (ARFs), which are small GTP-binding proteins; the complex also influences the Golgi structural integrity, as well as the processing, activity, and endocytic recycling of LDL receptors. Functionally, this coatomer complex protein, essential for Golgi budding and vesicular trafficking, is a selective binding protein (RACK) for protein kinase C, epsilon type. It binds to Golgi membranes in a GTP-dependent manner. The sequence is that of Coatomer subunit beta' (Copb2) from Mus musculus (Mouse).